An 86-amino-acid polypeptide reads, in one-letter code: MSKGHSLQDPYLNTLRKEKVGVSIYLVNGIKLQGTIESFDQFVILLKNTVSQMVYKHAISTVVPVRPIRLPSATDADGADAEPGNA.

The region spanning 9–68 is the Sm domain; sequence DPYLNTLRKEKVGVSIYLVNGIKLQGTIESFDQFVILLKNTVSQMVYKHAISTVVPVRPI.

This sequence belongs to the Hfq family. Homohexamer.

RNA chaperone that binds small regulatory RNA (sRNAs) and mRNAs to facilitate mRNA translational regulation in response to envelope stress, environmental stress and changes in metabolite concentrations. Also binds with high specificity to tRNAs. This is RNA-binding protein Hfq from Pseudomonas savastanoi pv. phaseolicola (strain 1448A / Race 6) (Pseudomonas syringae pv. phaseolicola (strain 1448A / Race 6)).